The primary structure comprises 236 residues: Small ribosomal subunit protein eS6 (236 aa).

A phosphoserine mark is found at Ser232 and Ser233.

Belongs to the eukaryotic ribosomal protein eS6 family. In terms of processing, phosphorylated.

The polypeptide is Small ribosomal subunit protein eS6 (RPS6A) (Candida glabrata (strain ATCC 2001 / BCRC 20586 / JCM 3761 / NBRC 0622 / NRRL Y-65 / CBS 138) (Yeast)).